The following is a 229-amino-acid chain: GTP cyclohydrolase 1 (229 aa).

Positions 1–26 are disordered; the sequence is MDAKIKPIRGTNPAEGRPEFQPAELE. Zn(2+)-binding residues include Cys118, His121, and Cys189.

It belongs to the GTP cyclohydrolase I family. As to quaternary structure, toroid-shaped homodecamer, composed of two pentamers of five dimers.

The enzyme catalyses GTP + H2O = 7,8-dihydroneopterin 3'-triphosphate + formate + H(+). It participates in cofactor biosynthesis; 7,8-dihydroneopterin triphosphate biosynthesis; 7,8-dihydroneopterin triphosphate from GTP: step 1/1. This Rhodopseudomonas palustris (strain ATCC BAA-98 / CGA009) protein is GTP cyclohydrolase 1.